A 355-amino-acid chain; its full sequence is Protein-glutamate methylesterase/protein-glutamine glutaminase 3 (355 aa).

The 118-residue stretch at 5-122 folds into the Response regulatory domain; that stretch reads KVLIVDDSAV…KQFLEESRVR (118 aa). Asp-56 is subject to 4-aspartylphosphate. The CheB-type methylesterase domain occupies 165–355; that stretch reads IQTTEKVVVV…IAREVLRLCG (191 aa). Residues Ser-177, His-203, and Asp-299 contribute to the active site.

Belongs to the CheB family. Post-translationally, phosphorylated by CheA. Phosphorylation of the N-terminal regulatory domain activates the methylesterase activity.

The protein resides in the cytoplasm. The catalysed reaction is [protein]-L-glutamate 5-O-methyl ester + H2O = L-glutamyl-[protein] + methanol + H(+). It carries out the reaction L-glutaminyl-[protein] + H2O = L-glutamyl-[protein] + NH4(+). Its function is as follows. Involved in chemotaxis. Part of a chemotaxis signal transduction system that modulates chemotaxis in response to various stimuli. Catalyzes the demethylation of specific methylglutamate residues introduced into the chemoreceptors (methyl-accepting chemotaxis proteins or MCP) by CheR. Also mediates the irreversible deamidation of specific glutamine residues to glutamic acid. In Geobacter metallireducens (strain ATCC 53774 / DSM 7210 / GS-15), this protein is Protein-glutamate methylesterase/protein-glutamine glutaminase 3.